A 596-amino-acid polypeptide reads, in one-letter code: MSFRSAEGVSIMQALAMTVAEIPVFLYSTFGQSIFSQLKLSPSLKKVLFATALGSVALALTAHQLKRRGRKRKQTLGKEAQKPVGIPEQLLRSSRPASLKRGPVPARQMMSPSTRSNDTLSGVSSIAQSKHSSSSHSIASMRVPSSPNQSVNAGAAWEAEPVAEEPAVGEDANAENLYLMGMELFEEALRKWELALNIRHRSHSRASASNSQGSELVERHSPEVRNHQFAERLETLLHRAYHLQEDFGSTIPPDSLLADLESEGTLILPTLGSSHPIQDDDATTVTSDDSFFSAAELFETFSLEDSFHLLKPAALYEEALSLVKDGDVACRSLRTELLECYSDQDFLAKLHCVRQAFQVLLLDETHRMFFMETGKQMISGLLVKANKSPKAFLESYEDMLQYTQREETWPVSKMELEGRGVVCMNFFDIVLDFILMDAFEDLESPPSSVVAVLRNRWLSDSFKETALATACWSVLKAKRRLLMVPDGFIAHFYVISEHVSPVLAFGFLGPHQHLSEVCTIFKQQIVQYLKDMFDHDKVRFTSVPSLAEDILRLSHRRADILMGYLGIENLPETNGALPKSPCQAESGNLDASGQQD.

Transmembrane regions (helical) follow at residues 11–31 and 40–60; these read IMQA…STFG and LSPS…ALAL. 2 disordered regions span residues 67 to 158 and 576 to 596; these read RRGR…AAWE and ALPK…GQQD. Polar residues predominate over residues 110 to 123; sequence MSPSTRSNDTLSGV. Residues 124 to 140 are compositionally biased toward low complexity; it reads SSIAQSKHSSSSHSIAS. 2 stretches are compositionally biased toward polar residues: residues 143–152 and 583–596; these read VPSSPNQSVN and QAES…GQQD.

The protein belongs to the mitoguardin family. In terms of assembly, homodimer and heterodimer; forms heterodimers with miga1.

Its subcellular location is the mitochondrion outer membrane. Its function is as follows. Regulator of mitochondrial fusion: acts by forming homo- and heterodimers at the mitochondrial outer membrane and facilitating the formation of pld6/MitoPLD dimers. May act by regulating phospholipid metabolism via pld6/MitoPLD. The sequence is that of Mitoguardin 2 from Danio rerio (Zebrafish).